Consider the following 333-residue polypeptide: MAALAPPVAAIRRAVRRALTTLPDAGPVLVACSGGADSLALAAATAFVAPRLGRPAGLVTVDHGLQEGSARRATAVVDWAHTAGLAPVEAIRVDVSERPGGPEAAAREARYQALTEAAGRLGAAALLTGHTRDDQAETVLLALARGAGPRGLAGMPTRRWLGEALLLRPLLEVSREQTRAACTALGLAPWTDPHNTDPAYARARVRSEVLPALVRALGPGVLDNLARTARLVAADTAALDEQATVALDGVRHPDGGLCVGGLAGLAPAVRGRVLHVWARELGARPGALSHRHVDALEALVTGWRGQGAAYLPGGLRVFRRAGRLTVVDPCPPA.

33 to 38 serves as a coordination point for ATP; the sequence is SGGADS.

This sequence belongs to the tRNA(Ile)-lysidine synthase family.

The protein localises to the cytoplasm. The enzyme catalyses cytidine(34) in tRNA(Ile2) + L-lysine + ATP = lysidine(34) in tRNA(Ile2) + AMP + diphosphate + H(+). Its function is as follows. Ligates lysine onto the cytidine present at position 34 of the AUA codon-specific tRNA(Ile) that contains the anticodon CAU, in an ATP-dependent manner. Cytidine is converted to lysidine, thus changing the amino acid specificity of the tRNA from methionine to isoleucine. This Salinispora arenicola (strain CNS-205) protein is tRNA(Ile)-lysidine synthase.